Reading from the N-terminus, the 413-residue chain is Interferon-inducible GTPase 1 (413 aa).

A lipid anchor (N-myristoyl glycine) is attached at Gly-2. Residues 68–250 (SVLNVAVTGE…PVLMDKLISD (183 aa)) enclose the IRG-type G domain. The GDP site is built by Gly-79, Gly-81, Lys-82, Ser-83, Ser-84, Thr-102, and Gly-103. The residue at position 102 (Thr-102) is a (Microbial infection) Phosphothreonine; by ROP18. The residue at position 108 (Thr-108) is a (Microbial infection) Phosphothreonine; by ROP18. Positions 184, 186, 187, and 232 each coordinate GDP. The cysteines at positions 236 and 410 are disulfide-linked.

It belongs to the TRAFAC class dynamin-like GTPase superfamily. IRG family. Monomer, as apoenzyme and in the GDP-bound form. Homooligomer, upon GTP binding. Interacts with HOOK3. As to quaternary structure, (Microbial infection) Interacts with Toxoplasma gondii GRA7 in GTP-dependent manner; the interaction results in faster turnover of the GTP-activated IIGP1 oligomer. Interacts with T.gondii ROP5; the interaction results in inhibition of IRGA6/IIGP1 GTPase activity and oligomerization. Myristoylated. Post-translationally, (Microbial infection) Phosphorylated by Toxoplasma gondii ROP18 from virulent strains.

It is found in the cytoplasm. Its subcellular location is the nucleus membrane. The protein resides in the endoplasmic reticulum membrane. The protein localises to the golgi apparatus. It localises to the golgi stack membrane. It is found in the parasitophorous vacuole membrane. The catalysed reaction is GTP + H2O = GDP + phosphate + H(+). In terms of biological role, GTPase with low activity. Has higher affinity for GDP than for GTP. Plays a role in resistance to intracellular pathogens. During infection with avirulent Toxoplasma gondii strains, recruited to the parasitophorous vacuole membrane. Required for disruption of the parasitophorous vacuole formed following T.gondii infection and subsequent killing of the parasite. Mediates resistance to Chlamydia trachomatis infection by targeting bacterial inclusions to autophagosomes for subsequent lysosomal destruction. The chain is Interferon-inducible GTPase 1 (Iigp1) from Mus musculus (Mouse).